We begin with the raw amino-acid sequence, 276 residues long: Elongation factor Ts (276 aa).

The tract at residues 79–82 is involved in Mg(2+) ion dislocation from EF-Tu; the sequence is TDFV.

The protein belongs to the EF-Ts family.

The protein localises to the cytoplasm. Its function is as follows. Associates with the EF-Tu.GDP complex and induces the exchange of GDP to GTP. It remains bound to the aminoacyl-tRNA.EF-Tu.GTP complex up to the GTP hydrolysis stage on the ribosome. The protein is Elongation factor Ts of Buchnera aphidicola subsp. Cinara cedri (strain Cc).